The sequence spans 573 residues: DNA ligase (573 aa).

Glu250 is a binding site for ATP. Lys252 serves as the catalytic N6-AMP-lysine intermediate. ATP-binding residues include Arg257, Arg272, Glu301, Phe342, Arg432, and Lys438.

Belongs to the ATP-dependent DNA ligase family. Mg(2+) serves as cofactor.

The enzyme catalyses ATP + (deoxyribonucleotide)n-3'-hydroxyl + 5'-phospho-(deoxyribonucleotide)m = (deoxyribonucleotide)n+m + AMP + diphosphate.. In terms of biological role, DNA ligase that seals nicks in double-stranded DNA during DNA replication, DNA recombination and DNA repair. This Methanococcus maripaludis (strain C6 / ATCC BAA-1332) protein is DNA ligase.